Consider the following 544-residue polypeptide: Calcium-dependent protein kinase 6 (544 aa).

Residues 1–47 (MGNSCRGSFKDKIYEGNHSRPEENSKSTTTTVSSVHSPTTDQDFSKQ) are disordered. Gly-2 carries N-myristoyl glycine lipidation. A compositionally biased stretch (basic and acidic residues) spans 8–25 (SFKDKIYEGNHSRPEENS). Residues 26–40 (KSTTTTVSSVHSPTT) show a composition bias toward low complexity. One can recognise a Protein kinase domain in the interval 85–343 (YTLSRKLGQG…AHEVLRHPWI (259 aa)). Residues 91–99 (LGQGQFGTT) and Lys-114 contribute to the ATP site. The active-site Proton acceptor is the Asp-209. Ser-249 is subject to Phosphoserine. The segment at 349–379 (APDRALDPAVLSRLKQFSAMNKLKKMALKVI) is autoinhibitory domain. EF-hand domains are found at residues 386-421 (EEIA…YGST), 422-457 (LKDT…LNKL), 458-493 (EREE…HGMT), and 497-527 (LEDI…GNAG). Positions 399, 401, 403, 410, 435, 437, 439, 441, 446, 471, 473, 475, 477, 482, 505, 507, 509, 511, and 516 each coordinate Ca(2+).

This sequence belongs to the protein kinase superfamily. Ser/Thr protein kinase family. CDPK subfamily. Interacts with SLAC1. Interacts with FD. In terms of tissue distribution, expressed in both guard cells and mesophyll cells. Expressed in the shoot apical meristem.

The protein resides in the cell membrane. It is found in the nucleus. It carries out the reaction L-seryl-[protein] + ATP = O-phospho-L-seryl-[protein] + ADP + H(+). The enzyme catalyses L-threonyl-[protein] + ATP = O-phospho-L-threonyl-[protein] + ADP + H(+). With respect to regulation, activated by calcium. Autophosphorylation may play an important role in the regulation of the kinase activity. May play a role in signal transduction pathways that involve calcium as a second messenger. Functions in abscisic acid (ABA) regulation of guard cell S-type anion- and Ca(2+)-permeable channels and stomatal closure. Phosphorylates FD. This is Calcium-dependent protein kinase 6 (CPK6) from Arabidopsis thaliana (Mouse-ear cress).